A 55-amino-acid polypeptide reads, in one-letter code: uncharacterized protein (55 aa).

A helical membrane pass occupies residues 7 to 24 (VALVGAVLATLTACTGHI).

The protein resides in the membrane. This is an uncharacterized protein from Escherichia coli O157:H7.